The primary structure comprises 277 residues: Large ribosomal subunit protein uL2 (277 aa).

The interval 222–277 (GVAMNPIDHPHGGGEGRTSGGRHPVTPWGKPTKGKKTRTNKSTDKFILLSRHKRKK) is disordered.

The protein belongs to the universal ribosomal protein uL2 family. Part of the 50S ribosomal subunit. Forms a bridge to the 30S subunit in the 70S ribosome.

One of the primary rRNA binding proteins. Required for association of the 30S and 50S subunits to form the 70S ribosome, for tRNA binding and peptide bond formation. It has been suggested to have peptidyltransferase activity; this is somewhat controversial. Makes several contacts with the 16S rRNA in the 70S ribosome. In Bradyrhizobium sp. (strain ORS 278), this protein is Large ribosomal subunit protein uL2.